Reading from the N-terminus, the 441-residue chain is Ribosomal protein uS12 methylthiotransferase RimO (441 aa).

An MTTase N-terminal domain is found at 8–118 (PKIGFVSLGC…VLEHVHHYVP (111 aa)). Positions 17, 53, 82, 150, 154, and 157 each coordinate [4Fe-4S] cluster. The Radical SAM core domain maps to 136–373 (LTPRHYAYLK…MQLQQQISAE (238 aa)). The 66-residue stretch at 376-441 (QEKVGREILV…DEYDLWGSRV (66 aa)) folds into the TRAM domain.

It belongs to the methylthiotransferase family. RimO subfamily. [4Fe-4S] cluster is required as a cofactor.

Its subcellular location is the cytoplasm. The catalysed reaction is L-aspartate(89)-[ribosomal protein uS12]-hydrogen + (sulfur carrier)-SH + AH2 + 2 S-adenosyl-L-methionine = 3-methylsulfanyl-L-aspartate(89)-[ribosomal protein uS12]-hydrogen + (sulfur carrier)-H + 5'-deoxyadenosine + L-methionine + A + S-adenosyl-L-homocysteine + 2 H(+). In terms of biological role, catalyzes the methylthiolation of an aspartic acid residue of ribosomal protein uS12. The polypeptide is Ribosomal protein uS12 methylthiotransferase RimO (Shigella sonnei (strain Ss046)).